Consider the following 865-residue polypeptide: Leucine--tRNA ligase (865 aa).

The 'HIGH' region motif lies at 41–51; the sequence is PYPSGRIHMGH. The 'KMSKS' region signature appears at 614–618; sequence KMSKS. Lys617 is a binding site for ATP.

This sequence belongs to the class-I aminoacyl-tRNA synthetase family.

It is found in the cytoplasm. The catalysed reaction is tRNA(Leu) + L-leucine + ATP = L-leucyl-tRNA(Leu) + AMP + diphosphate. This is Leucine--tRNA ligase from Rhodospirillum centenum (strain ATCC 51521 / SW).